A 313-amino-acid polypeptide reads, in one-letter code: Cytosolic Fe-S cluster assembly factor NUBP1 homolog (313 aa).

The interval 1-25 (MSDVPEDANAGCPGTGSAGAGKASG) is disordered. [4Fe-4S] cluster-binding residues include Cys12, Cys26, Cys29, and Cys35. 66 to 73 (GKGGVGKS) serves as a coordination point for ATP. 2 residues coordinate [4Fe-4S] cluster: Cys240 and Cys243.

Belongs to the Mrp/NBP35 ATP-binding proteins family. NUBP1/NBP35 subfamily. Heterotetramer of 2 NUBP1 and 2 NUBP2 chains. The cofactor is [4Fe-4S] cluster.

Its subcellular location is the cytoplasm. It is found in the cell projection. Component of the cytosolic iron-sulfur (Fe/S) protein assembly (CIA) machinery. Required for maturation of extramitochondrial Fe-S proteins. The NUBP1-NUBP2 heterotetramer forms a Fe-S scaffold complex, mediating the de novo assembly of an Fe-S cluster and its transfer to target apoproteins. Regulates cilium formation and structure. The chain is Cytosolic Fe-S cluster assembly factor NUBP1 homolog from Caenorhabditis briggsae.